We begin with the raw amino-acid sequence, 637 residues long: Glutamate--cysteine ligase catalytic subunit (637 aa).

An N-acetylmethionine modification is found at Met-1. A phosphoserine mark is found at Ser-5 and Ser-8.

The protein belongs to the glutamate--cysteine ligase type 3 family. As to quaternary structure, heterodimer of a catalytic heavy chain and a regulatory light chain. Most abundant in kidney. Also found in liver and testis.

It catalyses the reaction L-cysteine + L-glutamate + ATP = gamma-L-glutamyl-L-cysteine + ADP + phosphate + H(+). The catalysed reaction is (2S)-2-aminobutanoate + L-glutamate + ATP = gamma-L-glutamyl-(2S)-2-aminobutanoate + ADP + phosphate + H(+). It participates in sulfur metabolism; glutathione biosynthesis; glutathione from L-cysteine and L-glutamate: step 1/2. Feedback inhibition by glutathione. Its function is as follows. Catalyzes the ATP-dependent ligation of L-glutamate and L-cysteine and participates in the first and rate-limiting step in glutathione biosynthesis. The sequence is that of Glutamate--cysteine ligase catalytic subunit from Rattus norvegicus (Rat).